A 187-amino-acid chain; its full sequence is Large ribosomal subunit protein uL22A (187 aa).

It belongs to the universal ribosomal protein uL22 family. In terms of assembly, component of the large ribosomal subunit (LSU). Mature yeast ribosomes consist of a small (40S) and a large (60S) subunit. The 40S small subunit contains 1 molecule of ribosomal RNA (18S rRNA) and at least 33 different proteins. The large 60S subunit contains 3 rRNA molecules (25S, 5.8S and 5S rRNA) and at least 46 different proteins. uL22 is associated with the polypeptide exit tunnel.

Its subcellular location is the cytoplasm. In terms of biological role, component of the ribosome, a large ribonucleoprotein complex responsible for the synthesis of proteins in the cell. The small ribosomal subunit (SSU) binds messenger RNAs (mRNAs) and translates the encoded message by selecting cognate aminoacyl-transfer RNA (tRNA) molecules. The large subunit (LSU) contains the ribosomal catalytic site termed the peptidyl transferase center (PTC), which catalyzes the formation of peptide bonds, thereby polymerizing the amino acids delivered by tRNAs into a polypeptide chain. The nascent polypeptides leave the ribosome through a tunnel in the LSU and interact with protein factors that function in enzymatic processing, targeting, and the membrane insertion of nascent chains at the exit of the ribosomal tunnel. This Schizosaccharomyces pombe (strain 972 / ATCC 24843) (Fission yeast) protein is Large ribosomal subunit protein uL22A (rpl1701).